We begin with the raw amino-acid sequence, 218 residues long: MRIILLGAPGAGKGTQAQFISSTFSIPQISTGDMLRAAINEGTPLGLEAKKVMDAGKLVSDEIILGLVKERLSKSDCKNGCLFDGFPRTIAQADALKNDCIQIDHVIDIEVDDEEIIKRMSGRRVHPASGRTYHVLFNPPAKEGVDDITGDPLVQREDDCEETVRKRLDIYHKETAPLIEYYREYKKNGGPNALKFSTIKGTGSVESIKEKILNIFHN.

10-15 (GAGKGT) serves as a coordination point for ATP. Residues 30 to 59 (STGDMLRAAINEGTPLGLEAKKVMDAGKLV) form an NMP region. AMP is bound by residues Thr-31, Arg-36, 57–59 (KLV), 85–88 (GFPR), and Gln-92. The tract at residues 122–159 (GRRVHPASGRTYHVLFNPPAKEGVDDITGDPLVQREDD) is LID. ATP-binding positions include Arg-123 and 132–133 (TY). AMP contacts are provided by Arg-156 and Arg-167. Gly-203 serves as a coordination point for ATP.

It belongs to the adenylate kinase family. In terms of assembly, monomer.

It localises to the cytoplasm. It catalyses the reaction AMP + ATP = 2 ADP. Its pathway is purine metabolism; AMP biosynthesis via salvage pathway; AMP from ADP: step 1/1. Functionally, catalyzes the reversible transfer of the terminal phosphate group between ATP and AMP. Plays an important role in cellular energy homeostasis and in adenine nucleotide metabolism. This Chlorobium phaeobacteroides (strain BS1) protein is Adenylate kinase.